A 489-amino-acid chain; its full sequence is Rhamnulokinase (489 aa).

Ala13–Arg17 is a binding site for ATP. Cys68 and Cys222 are disulfide-bonded. Substrate contacts are provided by residues Gly83 and His236–Thr238. The Proton acceptor role is filled by Asp237. Thr259 is an ATP binding site. Asn296 is a substrate binding site. Gln304 lines the ATP pocket. Cys353 and Cys370 are joined by a disulfide. ATP is bound at residue Gly402. Cys413 and Cys417 form a disulfide bridge.

This sequence belongs to the rhamnulokinase family. Requires Mg(2+) as cofactor.

It carries out the reaction L-rhamnulose + ATP = L-rhamnulose 1-phosphate + ADP + H(+). It functions in the pathway carbohydrate degradation; L-rhamnose degradation; glycerone phosphate from L-rhamnose: step 2/3. Functionally, involved in the catabolism of L-rhamnose (6-deoxy-L-mannose). Catalyzes the transfer of the gamma-phosphate group from ATP to the 1-hydroxyl group of L-rhamnulose to yield L-rhamnulose 1-phosphate. The sequence is that of Rhamnulokinase from Salmonella heidelberg (strain SL476).